The primary structure comprises 291 residues: UDP-N-acetylenolpyruvoylglucosamine reductase (291 aa).

The region spanning 22–187 (RIGGPARYFK…ASATFQLTKD (166 aa)) is the FAD-binding PCMH-type domain. R166 is a catalytic residue. C214 (proton donor) is an active-site residue. E283 is a catalytic residue.

The protein belongs to the MurB family. Requires FAD as cofactor.

It localises to the cytoplasm. It catalyses the reaction UDP-N-acetyl-alpha-D-muramate + NADP(+) = UDP-N-acetyl-3-O-(1-carboxyvinyl)-alpha-D-glucosamine + NADPH + H(+). It participates in cell wall biogenesis; peptidoglycan biosynthesis. In terms of biological role, cell wall formation. This chain is UDP-N-acetylenolpyruvoylglucosamine reductase, found in Chlamydia trachomatis serovar L2 (strain ATCC VR-902B / DSM 19102 / 434/Bu).